Here is a 104-residue protein sequence, read N- to C-terminus: uncharacterized protein (104 aa).

This is an uncharacterized protein from Acidithiobacillus ferridurans.